Reading from the N-terminus, the 666-residue chain is 1-deoxy-D-xylulose-5-phosphate synthase (666 aa).

Residues His-103 and 144 to 146 (AHS) contribute to the thiamine diphosphate site. Asp-175 serves as a coordination point for Mg(2+). Residues 176 to 177 (GA), Asn-204, Tyr-314, and Glu-396 contribute to the thiamine diphosphate site. Asn-204 contacts Mg(2+).

It belongs to the transketolase family. DXPS subfamily. In terms of assembly, homodimer. Mg(2+) serves as cofactor. Requires thiamine diphosphate as cofactor.

It catalyses the reaction D-glyceraldehyde 3-phosphate + pyruvate + H(+) = 1-deoxy-D-xylulose 5-phosphate + CO2. It functions in the pathway metabolic intermediate biosynthesis; 1-deoxy-D-xylulose 5-phosphate biosynthesis; 1-deoxy-D-xylulose 5-phosphate from D-glyceraldehyde 3-phosphate and pyruvate: step 1/1. Its function is as follows. Catalyzes the acyloin condensation reaction between C atoms 2 and 3 of pyruvate and glyceraldehyde 3-phosphate to yield 1-deoxy-D-xylulose-5-phosphate (DXP). The polypeptide is 1-deoxy-D-xylulose-5-phosphate synthase (Nitrobacter winogradskyi (strain ATCC 25391 / DSM 10237 / CIP 104748 / NCIMB 11846 / Nb-255)).